The following is a 279-amino-acid chain: Dihydropteroate synthase type-1 (279 aa).

The Pterin-binding domain occupies 1-258; that stretch reads MVTVFGILNL…APGDLRSAIT (258 aa). Mg(2+) is bound at residue asparagine 9. (7,8-dihydropterin-6-yl)methyl diphosphate is bound by residues aspartate 82, asparagine 101, aspartate 173, lysine 212, and 246-248; that span reads RTH.

The protein belongs to the DHPS family. In terms of assembly, homodimer or homotrimer. The cofactor is Mg(2+).

It carries out the reaction (7,8-dihydropterin-6-yl)methyl diphosphate + 4-aminobenzoate = 7,8-dihydropteroate + diphosphate. The protein operates within cofactor biosynthesis; tetrahydrofolate biosynthesis; 7,8-dihydrofolate from 2-amino-4-hydroxy-6-hydroxymethyl-7,8-dihydropteridine diphosphate and 4-aminobenzoate: step 1/2. Catalyzes the condensation of para-aminobenzoate (pABA) with 6-hydroxymethyl-7,8-dihydropterin diphosphate (DHPt-PP) to form 7,8-dihydropteroate (H2Pte), the immediate precursor of folate derivatives. In Corynebacterium glutamicum (Brevibacterium saccharolyticum), this protein is Dihydropteroate synthase type-1 (sulI).